Reading from the N-terminus, the 771-residue chain is Tubulin monoglycylase TTLL3 (771 aa).

The segment at 70-106 (PRPSFSQPRRHDHETETTDEGDSSDEDDLGEEVERDD) is disordered. The span at 86-106 (TTDEGDSSDEDDLGEEVERDD) shows a compositional bias: acidic residues. One can recognise a TTL domain in the interval 220 to 566 (EGEKMGEVHN…RRSERNTDTG (347 aa)). Residues Lys339, 345 to 346 (RG), 377 to 380 (QKYI), 390 to 392 (KFD), and 434 to 435 (CN) contribute to the ATP site. Position 345 (Arg345) interacts with a protein. Ser437 contributes to the L-glutamate binding site. The Mg(2+) site is built by Asp512, Glu525, and Asn527. ATP is bound at residue Glu525. Disordered stretches follow at residues 605–640 (LIQSHPEPLSKSTNHKSSLLSSPCTSGKENQSEEVK) and 682–713 (TELHHPQRLSHTQPQSDRPHTHRTRSNLPTLY). Polar residues predominate over residues 614-633 (SKSTNHKSSLLSSPCTSGKE).

Mg(2+) is required as a cofactor.

The protein resides in the cytoplasm. The protein localises to the cytoskeleton. It localises to the cell projection. It is found in the cilium. Its subcellular location is the cilium axoneme. The protein resides in the flagellum axoneme. It catalyses the reaction L-glutamyl-[protein] + glycine + ATP = glycyl-L-glutamyl-[protein] + ADP + phosphate + H(+). Its function is as follows. Monoglycylase which modifies alpha- and beta-tubulin, adding a single glycine on the gamma-carboxyl groups of specific glutamate residues to generate monoglycine side chains within the C-terminal tail of tubulin. Not involved in elongation step of the polyglycylation reaction. Preferentially glycylates a beta-tail peptide over the alpha-tail, although shifts its preference toward alpha-tail as beta-tail glutamylation increases. Competes with polyglutamylases for modification site on beta-tubulin substrate, thereby creating an anticorrelation between glycylation and glutamylation reactions. Not involved in elongation step of the polyglycylation reaction. The chain is Tubulin monoglycylase TTLL3 (ttll3) from Danio rerio (Zebrafish).